The primary structure comprises 595 residues: MRVAPEFYEFLRNRINISDVVRQKVALTRKSGNYVGLCPFHQEKTPSFTVSNSKRFFYCFGCKAAGDVIKFTSNISGLSYNESAIKLAIDYGIEIPKLTAKQKEFYEESDEILNILELANKFFRTQLTPEILHYLHERGITEETVKEFSIGFAPKNNKFEKFFHDKNIDIIKLGKAGLIGKRENGEIYNLFSNRITIPIRNIYNKIVGFGGRVLGEGLPKYLNSPETTVFQKSETLYGEHKAISSSYKKNHSILVEGYFDVIALHQAGFSETVASLGTSVTENHLHKLWRAGDEIILCLDGDNAGIKASIRTINLALPLINSEKKISFIRLPSGLDPDDAVNKNGADFFAKLIDKRISLSEMIWHIEYSGKSFKTAEEKANLEKNLKNYCSKISDSDLKVSYYRFFKDQIWQNLVTTQKKATTKNSNLAPIISSHGYSELEILEHAFCALLVKFPIILEEKDIRDFILNLNFNNKSLEEFRNWYLNEIIDNNVEASEITAIVEKTSFFDIFLLLSKTDNLFLDISFNKNNIRLDLLWQWLHKKYYLINLQQEYAITINSTDNHDFEKVLLYKKEILKIANELQVLNESFINHTIT.

The CHC2-type zinc finger occupies 38–62 (CPFHQEKTPSFTVSNSKRFFYCFGC). The Toprim domain maps to 250–332 (NHSILVEGYF…EKKISFIRLP (83 aa)). Mg(2+) is bound by residues E256, D300, and D302.

Belongs to the DnaG primase family. In terms of assembly, monomer. Interacts with DnaB. The cofactor is Zn(2+). It depends on Mg(2+) as a cofactor.

It catalyses the reaction ssDNA + n NTP = ssDNA/pppN(pN)n-1 hybrid + (n-1) diphosphate.. RNA polymerase that catalyzes the synthesis of short RNA molecules used as primers for DNA polymerase during DNA replication. The sequence is that of DNA primase from Rickettsia conorii (strain ATCC VR-613 / Malish 7).